A 322-amino-acid polypeptide reads, in one-letter code: Lipoyl synthase 2 (322 aa).

Residues 1–36 are disordered; the sequence is MKVILDLLNNDPRTTQRTERPRHPEKANRPDTPMES. The segment covering 14–34 has biased composition (basic and acidic residues); it reads TTQRTERPRHPEKANRPDTPM. Residues Cys-67, Cys-72, Cys-78, Cys-93, Cys-97, Cys-100, and Ser-306 each coordinate [4Fe-4S] cluster. Positions 79–295 constitute a Radical SAM core domain; sequence WAKKHATFMI…EKTAYAKGFL (217 aa).

The protein belongs to the radical SAM superfamily. Lipoyl synthase family. The cofactor is [4Fe-4S] cluster.

The protein localises to the cytoplasm. It carries out the reaction [[Fe-S] cluster scaffold protein carrying a second [4Fe-4S](2+) cluster] + N(6)-octanoyl-L-lysyl-[protein] + 2 oxidized [2Fe-2S]-[ferredoxin] + 2 S-adenosyl-L-methionine + 4 H(+) = [[Fe-S] cluster scaffold protein] + N(6)-[(R)-dihydrolipoyl]-L-lysyl-[protein] + 4 Fe(3+) + 2 hydrogen sulfide + 2 5'-deoxyadenosine + 2 L-methionine + 2 reduced [2Fe-2S]-[ferredoxin]. Its pathway is protein modification; protein lipoylation via endogenous pathway; protein N(6)-(lipoyl)lysine from octanoyl-[acyl-carrier-protein]: step 2/2. In terms of biological role, catalyzes the radical-mediated insertion of two sulfur atoms into the C-6 and C-8 positions of the octanoyl moiety bound to the lipoyl domains of lipoate-dependent enzymes, thereby converting the octanoylated domains into lipoylated derivatives. This Bradyrhizobium diazoefficiens (strain JCM 10833 / BCRC 13528 / IAM 13628 / NBRC 14792 / USDA 110) protein is Lipoyl synthase 2.